Here is a 208-residue protein sequence, read N- to C-terminus: Putative ADP-ribose pyrophosphatase YjhB (208 aa).

The Nudix hydrolase domain maps to 69 to 195 (TPKADVRGAV…NTPSQLSMLF (127 aa)). The Nudix box motif lies at 100-121 (GFCEIGLSPAENVVKEIKEESG). 2 residues coordinate Mg(2+): Glu115 and Glu119.

Belongs to the Nudix hydrolase family. Mg(2+) is required as a cofactor. Requires Mn(2+) as cofactor.

Its function is as follows. Probably mediates the hydrolysis of some nucleoside diphosphate derivatives. The polypeptide is Putative ADP-ribose pyrophosphatase YjhB (yjhB) (Bacillus subtilis (strain 168)).